The following is a 218-amino-acid chain: Ribonuclease HII (218 aa).

An RNase H type-2 domain is found at 12–206 (GRVAGVDEVG…VREALARSAL (195 aa)). A divalent metal cation is bound by residues Asp-18, Glu-19, and Asp-115.

This sequence belongs to the RNase HII family. Mn(2+) serves as cofactor. Mg(2+) is required as a cofactor.

The protein resides in the cytoplasm. The enzyme catalyses Endonucleolytic cleavage to 5'-phosphomonoester.. In terms of biological role, endonuclease that specifically degrades the RNA of RNA-DNA hybrids. This chain is Ribonuclease HII, found in Rhodospirillum rubrum (strain ATCC 11170 / ATH 1.1.1 / DSM 467 / LMG 4362 / NCIMB 8255 / S1).